The chain runs to 275 residues: Anthracycline biosynthesis protein DauV (275 aa).

VOC domains lie at 8-136 (APAW…VWRK) and 150-263 (SVGW…VVEL).

It functions in the pathway antibiotic biosynthesis; daunorubicin biosynthesis. It participates in antibiotic biosynthesis; carminomycin biosynthesis. Involved in the biosynthesis of the anthracyclines carminomycin and daunorubicin (daunomycin) which are aromatic polyketide antibiotics that exhibit high cytotoxicity and are widely applied in the chemotherapy of a variety of cancers. Acts jointly with DoxA in the conversion of 13-deoxycarminomycin and 13-deoxydaunorubicin to yield carminomycin and daunorubicin, respectively. This Streptomyces sp. (strain C5) protein is Anthracycline biosynthesis protein DauV (dauV).